We begin with the raw amino-acid sequence, 172 residues long: 3-hydroxydecanoyl-[acyl-carrier-protein] dehydratase (172 aa).

His71 is an active-site residue.

The protein belongs to the thioester dehydratase family. FabA subfamily. As to quaternary structure, homodimer.

Its subcellular location is the cytoplasm. The catalysed reaction is a (3R)-hydroxyacyl-[ACP] = a (2E)-enoyl-[ACP] + H2O. It carries out the reaction (3R)-hydroxydecanoyl-[ACP] = (2E)-decenoyl-[ACP] + H2O. It catalyses the reaction (2E)-decenoyl-[ACP] = (3Z)-decenoyl-[ACP]. It functions in the pathway lipid metabolism; fatty acid biosynthesis. Functionally, necessary for the introduction of cis unsaturation into fatty acids. Catalyzes the dehydration of (3R)-3-hydroxydecanoyl-ACP to E-(2)-decenoyl-ACP and then its isomerization to Z-(3)-decenoyl-ACP. Can catalyze the dehydratase reaction for beta-hydroxyacyl-ACPs with saturated chain lengths up to 16:0, being most active on intermediate chain length. This Photorhabdus laumondii subsp. laumondii (strain DSM 15139 / CIP 105565 / TT01) (Photorhabdus luminescens subsp. laumondii) protein is 3-hydroxydecanoyl-[acyl-carrier-protein] dehydratase.